The sequence spans 293 residues: 4-hydroxy-tetrahydrodipicolinate synthase (293 aa).

Threonine 45 lines the pyruvate pocket. The Proton donor/acceptor role is filled by tyrosine 133. The Schiff-base intermediate with substrate role is filled by lysine 161. A pyruvate-binding site is contributed by isoleucine 203.

Belongs to the DapA family. As to quaternary structure, homotetramer; dimer of dimers.

The protein resides in the cytoplasm. It carries out the reaction L-aspartate 4-semialdehyde + pyruvate = (2S,4S)-4-hydroxy-2,3,4,5-tetrahydrodipicolinate + H2O + H(+). It functions in the pathway amino-acid biosynthesis; L-lysine biosynthesis via DAP pathway; (S)-tetrahydrodipicolinate from L-aspartate: step 3/4. Its function is as follows. Catalyzes the condensation of (S)-aspartate-beta-semialdehyde [(S)-ASA] and pyruvate to 4-hydroxy-tetrahydrodipicolinate (HTPA). This Aliivibrio salmonicida (strain LFI1238) (Vibrio salmonicida (strain LFI1238)) protein is 4-hydroxy-tetrahydrodipicolinate synthase.